Consider the following 108-residue polypeptide: Parvalbumin beta 1 (108 aa).

A1 is subject to N-acetylalanine. EF-hand domains follow at residues 38–73 (KXXD…FCPK) and 77–108 (LTDA…LVKQ). 11 residues coordinate Ca(2+): D51, D53, S55, F57, E59, E62, D90, D92, D94, M96, and E101.

It belongs to the parvalbumin family.

In muscle, parvalbumin is thought to be involved in relaxation after contraction. It binds two calcium ions. In Oncorhynchus mykiss (Rainbow trout), this protein is Parvalbumin beta 1.